Reading from the N-terminus, the 327-residue chain is Leucotoxin LukD (327 aa).

A signal peptide spans 1–26 (MKIEKLGKSSVASSIALLLLSNTVDA).

It belongs to the aerolysin family. As to quaternary structure, toxicity requires sequential binding and synergistic association of a class S and a class F component which form heterooligomeric complexes. LukE (class S) associates with LukD (class F). LukD can also associate with HlgA.

It localises to the secreted. In terms of biological role, part of a bi-component leucotoxin that acts by forming pores in the membrane of the target cells. LukE-LukD is as effective as the Panton-Valentine leucocidin (PVL) for inducing dermonecrosis when injected in the rabbit skin, but not hemolytic and poorly leucotoxic on human blood cells compared to other leucotoxins expressed by S.aureus. HlgA-LukD is a Ca(2+) channel inducer. This is Leucotoxin LukD (lukD) from Staphylococcus aureus.